Reading from the N-terminus, the 597-residue chain is Arginine--tRNA ligase (597 aa).

Residues 137-147 (PNIAKEMHVGH) carry the 'HIGH' region motif.

It belongs to the class-I aminoacyl-tRNA synthetase family. In terms of assembly, monomer.

Its subcellular location is the cytoplasm. It catalyses the reaction tRNA(Arg) + L-arginine + ATP = L-arginyl-tRNA(Arg) + AMP + diphosphate. The protein is Arginine--tRNA ligase of Parasynechococcus marenigrum (strain WH8102).